The chain runs to 217 residues: Large ribosomal subunit protein uL3 (217 aa).

A disordered region spans residues 134-154 (DATHGNSLSHRAPGSIGQCQT). Residue Q153 is modified to N5-methylglutamine.

Belongs to the universal ribosomal protein uL3 family. As to quaternary structure, part of the 50S ribosomal subunit. Forms a cluster with proteins L14 and L19. Post-translationally, methylated by PrmB.

One of the primary rRNA binding proteins, it binds directly near the 3'-end of the 23S rRNA, where it nucleates assembly of the 50S subunit. This chain is Large ribosomal subunit protein uL3, found in Coxiella burnetii (strain Dugway 5J108-111).